The chain runs to 222 residues: Riboflavin kinase (222 aa).

The tract at residues 1–94 (METIDAEDAA…AKIFDVKDEQ (94 aa)) is H-T-H motif-like. Residues 95–222 (YVLTGTVMSG…ENSEVVVVIG (128 aa)) form a riboflavin kinase region. Residue 104–109 (GVGEGR) participates in CDP binding. Residues threonine 133 and asparagine 135 each coordinate Mg(2+). Residues threonine 190 and glutamate 198 each contribute to the FMN site. 203 to 206 (TQLR) provides a ligand contact to CDP.

Belongs to the archaeal riboflavin kinase family. Requires Mg(2+) as cofactor.

It catalyses the reaction riboflavin + CTP = CDP + FMN + H(+). It participates in cofactor biosynthesis; FMN biosynthesis; FMN from riboflavin (CTP route): step 1/1. Functionally, catalyzes the CTP-dependent phosphorylation of riboflavin (vitamin B2) to form flavin mononucleotide (FMN). This is Riboflavin kinase (ribK) from Methanocorpusculum labreanum (strain ATCC 43576 / DSM 4855 / Z).